A 185-amino-acid polypeptide reads, in one-letter code: Ribosome-recycling factor (185 aa).

The protein belongs to the RRF family.

Its subcellular location is the cytoplasm. Responsible for the release of ribosomes from messenger RNA at the termination of protein biosynthesis. May increase the efficiency of translation by recycling ribosomes from one round of translation to another. This chain is Ribosome-recycling factor, found in Acidothermus cellulolyticus (strain ATCC 43068 / DSM 8971 / 11B).